A 399-amino-acid polypeptide reads, in one-letter code: MTRYSQPDALGQYGIYGGRYIPETLMQAVLELEQAYAEVKEDPAFRERMNDLLENYVGRQTPLYYAEHLTRTIGGAKIYLKREDLNHTGAHKINNTIGQALLAERMGKRKIVAETGAGQHGVATATVCALLDLECVIFMGEEDIRRQELNVFRMELLGAKVVSVTQGSRTLKDAVNEALRYWVKHVDDTHYLMGSVLGPHPFPEIVRDFQAVIGQETRTQILEKEGKLPEAIVACVGGGSNAIGMFHPFIDDEEVALYGIEAAGSGLETEKHAATMSKGEVGVLHGSMMYLLQDEHGQVTEAHSISAGLDYPGVGPEHSLLKDIGRVQYEAVTDQQALDALQLLCQKEGIIPALESAHAVAHAKELARGMQPEEVVVICLSGRGDKDVMTVRNALKGEA.

Position 92 is an N6-(pyridoxal phosphate)lysine (lysine 92).

Belongs to the TrpB family. In terms of assembly, tetramer of two alpha and two beta chains. It depends on pyridoxal 5'-phosphate as a cofactor.

It carries out the reaction (1S,2R)-1-C-(indol-3-yl)glycerol 3-phosphate + L-serine = D-glyceraldehyde 3-phosphate + L-tryptophan + H2O. The protein operates within amino-acid biosynthesis; L-tryptophan biosynthesis; L-tryptophan from chorismate: step 5/5. Its function is as follows. The beta subunit is responsible for the synthesis of L-tryptophan from indole and L-serine. The polypeptide is Tryptophan synthase beta chain (Exiguobacterium sibiricum (strain DSM 17290 / CCUG 55495 / CIP 109462 / JCM 13490 / 255-15)).